The following is a 207-amino-acid chain: Ribosomal RNA small subunit methyltransferase G (207 aa).

Residues Gly-73, Leu-78, Val-124–Glu-125, and Arg-139 each bind S-adenosyl-L-methionine.

The protein belongs to the methyltransferase superfamily. RNA methyltransferase RsmG family.

It localises to the cytoplasm. The catalysed reaction is guanosine(527) in 16S rRNA + S-adenosyl-L-methionine = N(7)-methylguanosine(527) in 16S rRNA + S-adenosyl-L-homocysteine. Specifically methylates the N7 position of guanine in position 527 of 16S rRNA. This is Ribosomal RNA small subunit methyltransferase G from Salmonella agona (strain SL483).